Here is a 232-residue protein sequence, read N- to C-terminus: uncharacterized protein (232 aa).

Residues 89-140 are a coiled coil; that stretch reads EFGTWQRRKNSLEDSLREVMKRRGELQDQLTAELGAIERMQTDLVGARQTLD.

This is an uncharacterized protein from Mycobacterium leprae (strain TN).